We begin with the raw amino-acid sequence, 621 residues long: Probable serine/threonine-protein kinase WNK2 (621 aa).

A Protein kinase domain is found at G28–L286. Residues T108–F111 and K158 contribute to the ATP site. D175 serves as the catalytic Proton acceptor. Disordered stretches follow at residues S438–P490, V501–D520, G527–S553, and H600–P621.

The protein belongs to the protein kinase superfamily. Ser/Thr protein kinase family. WNK subfamily.

The catalysed reaction is L-seryl-[protein] + ATP = O-phospho-L-seryl-[protein] + ADP + H(+). It catalyses the reaction L-threonyl-[protein] + ATP = O-phospho-L-threonyl-[protein] + ADP + H(+). In Oryza sativa subsp. japonica (Rice), this protein is Probable serine/threonine-protein kinase WNK2 (WNK2).